The sequence spans 622 residues: FERM domain-containing protein 6 (622 aa).

Positions 16–328 (RSVCIFLPND…NSHRLYMNLQ (313 aa)) constitute an FERM domain. Residues 364–445 (KRSRASGSSA…SGVESGGKDR (82 aa)) form a disordered region. Low complexity-rich tracts occupy residues 384-395 (HSTASHSSSHTS) and 425-438 (SSMT…TSGV). Ser522 is modified (phosphoserine). Thr523 is modified (phosphothreonine). Ser525, Ser542, and Ser544 each carry phosphoserine.

It is found in the cytoplasm. Its subcellular location is the cell membrane. This is FERM domain-containing protein 6 (FRMD6) from Homo sapiens (Human).